A 70-amino-acid chain; its full sequence is Small ribosomal subunit protein bS21 (70 aa).

It belongs to the bacterial ribosomal protein bS21 family.

The chain is Small ribosomal subunit protein bS21 from Cupriavidus pinatubonensis (strain JMP 134 / LMG 1197) (Cupriavidus necator (strain JMP 134)).